The following is a 139-amino-acid chain: GSK3-beta interaction protein (139 aa).

Residues 1 to 22 (METDCNPMELSSMSGFEEGSEL) are disordered. The segment at 41–45 (VNDVL) is required for PRKAR2A interaction; contributes to a protective effect against H(2)O(2)-induced apoptosis. Residues 115-139 (SPAYREAFGNALLQRLEALKRDGQS) are interaction with GSK3B and acts as a GSK3B inhibitor.

Belongs to the GSKIP family. As to quaternary structure, forms a complex composed of PRKAR2A or PRKAR2B, GSK3B and GSKIP through GSKIP interaction; facilitates PKA-induced phosphorylation of GSK3B leading to GSK3B inactivation; recruits DNM1L through GSK3B for PKA-mediated phosphorylation of DNM1L; promotes beta-catenin degradation through GSK3B-induced phosphorylation of beta-catenin; stabilizes beta-catenin and enhances Wnt-induced signaling through PKA-induced phosphorylation of beta-catenin. Interacts with GSK3B; induces GSK3B-mediated phosphorylation of GSKIP and inhibits GSK3B kinase activity. In terms of processing, phosphorylated by GSK3B.

Its subcellular location is the cytoplasm. The protein localises to the nucleus. Its function is as follows. A-kinase anchoring protein for GSK3B and PKA that regulates or facilitates their kinase activity towards their targets. The ternary complex enhances Wnt-induced signaling by facilitating the GSK3B- and PKA-induced phosphorylation of beta-catenin leading to beta-catenin degradation and stabilization respectively. Upon cAMP activation, the ternary complex contributes to neuroprotection against oxidative stress-induced apoptosis by facilitating the PKA-induced phosphorylation of DML1 and PKA-induced inactivation of GSK3B. During neurite outgrowth promotes neuron proliferation; while increases beta-catenin-induced transcriptional activity through GSK3B kinase activity inhibition, reduces N-cadherin level to promote cell cycle progression. May play a role in cleft palate formation and is required for postnatal life through modulation of the activity of GSK3B during development. The sequence is that of GSK3-beta interaction protein from Macaca fascicularis (Crab-eating macaque).